The chain runs to 81 residues: Defensin-like protein 144 (81 aa).

The N-terminal stretch at 1–24 (MKNSFRFSFTVITTFIICVLVSGA) is a signal peptide. 4 disulfides stabilise this stretch: Cys30-Cys74, Cys42-Cys61, Cys47-Cys69, and Cys51-Cys71.

This sequence belongs to the DEFL family.

The protein resides in the secreted. The polypeptide is Defensin-like protein 144 (LCR10) (Arabidopsis thaliana (Mouse-ear cress)).